We begin with the raw amino-acid sequence, 486 residues long: Solute carrier family 2, facilitated glucose transporter member 5 (486 aa).

Residue methionine 1 is modified to N-acetylmethionine. The Cytoplasmic portion of the chain corresponds to 1-19 (MEQEGQEKKKEGRLTLVLA). Residues 20 to 40 (LRTLIAAFGSSFQYAYNVSVC) form a helical membrane-spanning segment. Tyrosine 33 is a D-fructose binding site. At 41 to 69 (NSPSELMTEFYNDTYYDRTGELIDEFPLT) the chain is on the extracellular side. Residue asparagine 52 is glycosylated (N-linked (GlcNAc...) asparagine). A helical transmembrane segment spans residues 70-92 (LLWSVTVSMFPSGGFAGSLLVGP). The Cytoplasmic segment spans residues 93 to 99 (LVNKFGR). Residues 100–120 (KGALLFNNIFSIVPAILMGCS) form a helical membrane-spanning segment. Residues 121 to 127 (KVARSFE) lie on the Extracellular side of the membrane. A helical membrane pass occupies residues 128–150 (LIIISRLLVGICAGVSSNVVPMY). Residues 151–162 (LGELAPKNLRGA) are Cytoplasmic-facing. Residues 163-183 (LGVESQLFITLGILVAQIFGL) traverse the membrane as a helical segment. Glutamine 168 contributes to the D-fructose binding site. Residues 184-192 (RSIRQQKGW) lie on the Extracellular side of the membrane. Residues 193–211 (PILLGLTGGPAAAACPPFF) form a helical membrane-spanning segment. Residues 212–274 (PESPRYLLIG…LCAMRGLAWQ (63 aa)) lie on the Cytoplasmic side of the membrane. The chain crosses the membrane as a helical span at residues 275-294 (LISVVPLMWQQLSGVNAIYY). D-fructose-binding positions include glutamine 284 and 292–294 (IYY). Residues 295–306 (YDQIYLSPLDTD) are Extracellular-facing. Residues 307-327 (TQYYTAATGAVNVLMTVCTVF) form a helical membrane-spanning segment. Residues 328-334 (VVESWAR) are Cytoplasmic-facing. A helical transmembrane segment spans residues 335 to 355 (LLLLLGFSPLAPTCCVLTAAL). The Extracellular portion of the chain corresponds to 356–363 (ALQDTVSW). The chain crosses the membrane as a helical span at residues 364–385 (MPYISIVCIIVYVIGHAIGPAI). Residue histidine 379 coordinates D-fructose. The Cytoplasmic portion of the chain corresponds to 386 to 402 (RSLYTEIFLQSGRPPTW). A helical transmembrane segment spans residues 403 to 421 (WGQVHWLSNFTVGLVFPLI). 407-408 (HW) is a binding site for D-fructose. Over 422–426 (QWAGL) the chain is Extracellular. Residues 427-447 (YSFIIFGVACLSTTVYTFLIV) form a helical membrane-spanning segment. Residues 448–486 (PETKGKSFIEIIRRFIRMNKVEVSPDREELKDFPPDVSE) are Cytoplasmic-facing.

Belongs to the major facilitator superfamily. Sugar transporter (TC 2.A.1.1) family. Glucose transporter subfamily. Detected in jejunum. Detected at the intestinal brush-border membrane (at protein level). Detected in duodenum, jejunum and kidney.

It is found in the apical cell membrane. It localises to the cell membrane. The protein resides in the sarcolemma. It catalyses the reaction D-fructose(out) = D-fructose(in). Its function is as follows. Functions as a fructose transporter that has only low activity with other monosaccharides. Can mediate the uptake of deoxyglucose, but with low efficiency. Essential for fructose uptake in the small intestine. Plays a role in the regulation of salt uptake and blood pressure in response to dietary fructose. Required for the development of high blood pressure in response to high dietary fructose intake. In Oryctolagus cuniculus (Rabbit), this protein is Solute carrier family 2, facilitated glucose transporter member 5.